Here is a 107-residue protein sequence, read N- to C-terminus: Replication protein A 14 kDa subunit A (107 aa).

At Met-1 the chain carries N-acetylmethionine.

This sequence belongs to the replication factor A protein 3 family. As to quaternary structure, component of the heterotrimeric canonical replication protein A complex (RPA).

The protein resides in the nucleus. In terms of biological role, as part of the replication protein A (RPA/RP-A), a single-stranded DNA-binding heterotrimeric complex, may play an essential role in DNA replication, recombination and repair. Binds and stabilizes single-stranded DNA intermediates, preventing complementary DNA reannealing and recruiting different proteins involved in DNA metabolism. The chain is Replication protein A 14 kDa subunit A (RPA3A) from Arabidopsis thaliana (Mouse-ear cress).